Consider the following 791-residue polypeptide: Calcium-transporting ATPase CtpE (791 aa).

3 helical membrane-spanning segments follow: residues Leu53 to Ile73, Ile213 to Leu233, and Val252 to Val272. The active-site 4-aspartylphosphate intermediate is the Asp299. Residues Asp299, Thr301, and Asp530 each coordinate Mg(2+). Transmembrane regions (helical) follow at residues Val596 to Gly616, Ile627 to Ala647, Ala664 to Tyr684, Ala697 to Ala717, Val725 to Gln745, and Val757 to Trp777.

The protein belongs to the cation transport ATPase (P-type) (TC 3.A.3) family.

It is found in the cell membrane. It carries out the reaction Ca(2+)(in) + ATP + H2O = Ca(2+)(out) + ADP + phosphate + H(+). In terms of biological role, P-type ATPase involved in specific uptake of calcium. Essential for growth and maintenance of cell surface integrity under Ca(2+)-deficient conditions. The polypeptide is Calcium-transporting ATPase CtpE (Mycolicibacterium smegmatis (strain ATCC 700084 / mc(2)155) (Mycobacterium smegmatis)).